Here is a 199-residue protein sequence, read N- to C-terminus: MRFTVKQIAWLKVFLHLAGFLPLVWLFWAGHQGYFSADPAKDIQHFTGRMALKFLLATLLVAPLARYAKQPLLIRIRRLLGLWCFAWATLHLTSYTLLELGINNLALLGSEIINRPYLTLGMICWVILLALAATSTQAMQRKLGRRWQLLHNFVYLVAILAPIHYLWSVKIVSPQPIIYALLAVVLLACRYKKFRQWWR.

Transmembrane regions (helical) follow at residues 8–28 (IAWL…WLFW), 54–74 (FLLA…PLLI), 82–102 (LWCF…ELGI), 116–136 (PYLT…ATST), 149–169 (LLHN…LWSV), and 171–191 (IVSP…ACRY).

Belongs to the MsrQ family. In terms of assembly, heterodimer of a catalytic subunit (MsrP) and a heme-binding subunit (MsrQ). FMN serves as cofactor. The cofactor is heme b.

The protein localises to the cell inner membrane. Functionally, part of the MsrPQ system that repairs oxidized periplasmic proteins containing methionine sulfoxide residues (Met-O), using respiratory chain electrons. Thus protects these proteins from oxidative-stress damage caused by reactive species of oxygen and chlorine generated by the host defense mechanisms. MsrPQ is essential for the maintenance of envelope integrity under bleach stress, rescuing a wide series of structurally unrelated periplasmic proteins from methionine oxidation. MsrQ provides electrons for reduction to the reductase catalytic subunit MsrP, using the quinone pool of the respiratory chain. The polypeptide is Protein-methionine-sulfoxide reductase heme-binding subunit MsrQ (Klebsiella pneumoniae (strain 342)).